Here is a 367-residue protein sequence, read N- to C-terminus: Glycerol dehydrogenase (367 aa).

NAD(+) is bound by residues aspartate 37, glycine 94, lysine 95, threonine 116, and serine 119. Aspartate 121 provides a ligand contact to glycerol. Serine 125, leucine 127, and tyrosine 131 together coordinate NAD(+). Positions 171, 254, and 271 each coordinate Zn(2+). Histidine 254 contributes to the glycerol binding site.

This sequence belongs to the iron-containing alcohol dehydrogenase family. Zn(2+) is required as a cofactor.

It carries out the reaction glycerol + NAD(+) = dihydroxyacetone + NADH + H(+). Its pathway is polyol metabolism; glycerol fermentation; glycerone phosphate from glycerol (oxidative route): step 1/2. Its function is as follows. Catalyzes the NAD-dependent oxidation of glycerol to dihydroxyacetone (glycerone). Allows microorganisms to utilize glycerol as a source of carbon under anaerobic conditions. This is Glycerol dehydrogenase (gldA) from Escherichia coli O6:H1 (strain CFT073 / ATCC 700928 / UPEC).